Here is a 461-residue protein sequence, read N- to C-terminus: Fumarate hydratase class II (461 aa).

Residues 97 to 99 (SGT), 127 to 130 (HPND), 137 to 139 (SSN), and T185 each bind substrate. H186 functions as the Proton donor/acceptor in the catalytic mechanism. S316 is an active-site residue. Substrate is bound by residues S317 and 322 to 324 (KVN).

The protein belongs to the class-II fumarase/aspartase family. Fumarase subfamily. As to quaternary structure, homotetramer.

Its subcellular location is the cytoplasm. The catalysed reaction is (S)-malate = fumarate + H2O. It functions in the pathway carbohydrate metabolism; tricarboxylic acid cycle; (S)-malate from fumarate: step 1/1. In terms of biological role, involved in the TCA cycle. Catalyzes the stereospecific interconversion of fumarate to L-malate. The polypeptide is Fumarate hydratase class II (Staphylococcus haemolyticus (strain JCSC1435)).